The sequence spans 78 residues: Acyl carrier protein (78 aa).

Positions 2–77 (DDLFKKIQQL…DAYEFIKSQQ (76 aa)) constitute a Carrier domain. Serine 37 carries the post-translational modification O-(pantetheine 4'-phosphoryl)serine.

Belongs to the acyl carrier protein (ACP) family. 4'-phosphopantetheine is transferred from CoA to a specific serine of apo-ACP by AcpS. This modification is essential for activity because fatty acids are bound in thioester linkage to the sulfhydryl of the prosthetic group.

Its subcellular location is the cytoplasm. It participates in lipid metabolism; fatty acid biosynthesis. Functionally, carrier of the growing fatty acid chain in fatty acid biosynthesis. This Treponema denticola (strain ATCC 35405 / DSM 14222 / CIP 103919 / JCM 8153 / KCTC 15104) protein is Acyl carrier protein.